A 158-amino-acid chain; its full sequence is MILFVGFLLMEIVMPQISRTALVPYSAEQMYQLVNDVQSYPQFLPGCTGSRILESTPGQMTAAVDVSKAGISKTFTTRNQLTSNQSILMSLVDGPFKKLIGGWKFTPLSQDACRIEFHLDFEFTNKLIELAFGRVFKELAANMVQAFTVRAKEVYSAR.

The interval 70–158 (GISKTFTTRN…VRAKEVYSAR (89 aa)) is required for resistance of nitrosative stress but not persistence or toxic effects.

Belongs to the ribosome association toxin RatA family. As to quaternary structure, associates with 50S ribosomes.

In terms of biological role, toxic component of a type II toxin-antitoxin (TA) system. Binds to 50S ribosomal subunits, preventing them from associating with 30S subunits to form 70S ribosomes. In this strain of E.coli low levels of PasT complement operon disruption, however high levels are toxic; their effects are abrogated by high level expression of cognate antitoxin PasI. Plays a role in persistence after antibiotic exposure and survival of nitrosative stress; the toxic and persistence phenotypes are conferred by the same N-terminal region of the protein, while the stress resistance effects can be uncoupled from them in deletion mutants. The chain is Persistence and stress-resistance toxin PasT (pasT) from Escherichia coli O6:H1 (strain CFT073 / ATCC 700928 / UPEC).